We begin with the raw amino-acid sequence, 150 residues long: Ribonuclease K6 (150 aa).

The signal sequence occupies residues 1–23 (MVLCFPLLLLLLVLWGPVCLLHA). Residue His38 is the Proton acceptor of the active site. 4 disulfides stabilise this stretch: Cys46–Cys104, Cys60–Cys114, Cys78–Cys129, and Cys85–Cys92. An N-linked (GlcNAc...) asparagine glycan is attached at Asn55. Substrate is bound by residues 61 to 65 (KHQNT) and Lys86. A glycan (N-linked (GlcNAc...) asparagine) is linked at Asn100. Residue Arg105 participates in substrate binding. The active-site Proton donor is His145.

Belongs to the pancreatic ribonuclease family. Interacts (via N-terminus) with bacterial lipopolysaccharide (LPS).

It is found in the secreted. Its subcellular location is the lysosome. The protein localises to the cytoplasmic granule. Ribonuclease which shows a preference for the pyrimidines uridine and cytosine. Has potent antibacterial activity against a range of Gram-positive and Gram-negative bacteria, including P.aeruginosa, A.baumanii, M.luteus, S.aureus, E.faecalis, E.faecium, S.saprophyticus and E.coli. Causes loss of bacterial membrane integrity, and also promotes agglutination of Gram-negative bacteria. Probably contributes to urinary tract sterility. Bactericidal activity is independent of RNase activity. This chain is Ribonuclease K6 (RNASE6), found in Papio hamadryas (Hamadryas baboon).